Here is a 660-residue protein sequence, read N- to C-terminus: GRIP and coiled-coil domain-containing protein 2 (660 aa).

The segment at 1-28 is disordered; sequence MSAPESSISPVPPPGSSSGGGKKLDSLP. Coiled coils occupy residues 30–92, 115–464, and 517–596; these read EDLV…VENN, EWKE…KAIA, and DEYR…EYLK. A GRIP domain is found at 585 to 636; it reads ELSNEKNMEYLKNVFVQFLKPESVPAERDQLVIVLQRVLHLSPKEVEILKAA.

The protein is GRIP and coiled-coil domain-containing protein 2 of Caenorhabditis elegans.